Reading from the N-terminus, the 190-residue chain is Orotate phosphoribosyltransferase (190 aa).

5-phospho-alpha-D-ribose 1-diphosphate contacts are provided by residues Arg101, Lys102, Lys105, His107, and 128–136 (EDVVTTGGS). Residues Thr132 and Arg160 each contribute to the orotate site.

This sequence belongs to the purine/pyrimidine phosphoribosyltransferase family. PyrE subfamily. As to quaternary structure, homodimer. It depends on Mg(2+) as a cofactor.

The enzyme catalyses orotidine 5'-phosphate + diphosphate = orotate + 5-phospho-alpha-D-ribose 1-diphosphate. It functions in the pathway pyrimidine metabolism; UMP biosynthesis via de novo pathway; UMP from orotate: step 1/2. In terms of biological role, catalyzes the transfer of a ribosyl phosphate group from 5-phosphoribose 1-diphosphate to orotate, leading to the formation of orotidine monophosphate (OMP). This Synechococcus sp. (strain CC9605) protein is Orotate phosphoribosyltransferase.